A 1317-amino-acid chain; its full sequence is WASH complex subunit 2 (1317 aa).

Residues 1–219 (MNRTSPDSER…VGSDRGSIVD (219 aa)) are sufficient for interaction with WASHC3, WASHC4 and WASHC5; required for interaction with WASHC1. Ser157, Ser159, Ser204, Ser205, and Ser209 each carry phosphoserine. Over residues 201-213 (GELSSEEGSVGSD) the composition is skewed to low complexity. The disordered stretch occupies residues 201–630 (GELSSEEGSV…RKSKGELWDS (430 aa)). Composition is skewed to acidic residues over residues 219 to 232 (DSEEEKEEEESDED) and 250 to 274 (DEEEDDDGDLFADSEKEGDDIEDIE). Ser284 is modified (phosphoserine). Composition is skewed to basic and acidic residues over residues 289–325 (LAARIKGDMSNQLKEEQIADGKPQKTMKEKKEKRTPP) and 366–376 (DLFRETSRDRP). Residue Thr323 is modified to Phosphothreonine. The interval 348–582 (SRGGLFSGQG…QVSSQQPQSQ (235 aa)) is sufficient for interaction with CCDC93. Positions 349 to 1317 (RGGLFSGQGL…DDPLNAFGSQ (969 aa)) are interaction with VPS35. Positions 358-368 (LFDDEDESDLF) match the LFa 1 motif. Residues 379–399 (APVSEESSSPKPGKKIPAGAV) are compositionally biased toward low complexity. A phosphoserine mark is found at Ser385 and Ser387. 2 short sequence motifs (LFa) span residues 433-445 (LFDDNDDDDDNFF) and 464-473 (IFDDEEGDLF). The segment covering 500-518 (TLPSSKNPKLVSETKTQKG) has biased composition (polar residues). 2 short sequence motifs (LFa) span residues 519-530 (LFSDEEDSEDLF) and 554-565 (LFGDEDEEDNLF). Phosphoserine occurs at positions 521 and 526. Over residues 529–548 (LFSSQNSSKSKSASLLSSQL) the composition is skewed to low complexity. Over residues 569–582 (PAKKQVSSQQPQSQ) the composition is skewed to low complexity. Residues 583–592 (EKPKPSEQPK) are compositionally biased toward basic and acidic residues. An LFa 6 motif is present at residues 599 to 611 (LFSSDEEDQWNIT). Phosphoserine occurs at positions 601 and 602. Basic and acidic residues predominate over residues 613–627 (SHTKLATDRKSKGEL). 2 short sequence motifs (LFa) span residues 646 to 657 (LFEEDDDEADLF) and 673 to 685 (LFEDDDDSGSSLF). Residues 667-817 (TQRTSLLFED…GRPKSTGVFQ (151 aa)) are disordered. A Phosphoserine modification is found at Ser710. Positions 717–744 (VPSRVKSVDVKVGNGKEADVAKVTEKEG) are enriched in basic and acidic residues. Phosphoserine occurs at positions 763 and 778. The segment covering 788-810 (EDQSNTHVSKNDAEKGLKTDGRP) has biased composition (basic and acidic residues). Short sequence motifs (LFa) lie at residues 815–823 (VFQDEELLF) and 832–838 (DPDVDLF). At Ser853 the chain carries Phosphoserine. Residues 854–864 (LFGDDEDYDLF) carry the LFa 11 motif. Disordered regions lie at residues 867–926 (AKTQ…REPS) and 960–1079 (ELAF…AAPP). Over residues 874-906 (PEKKGALKKDRPVSLKNEEAPESTEGSKEKSLW) the composition is skewed to basic and acidic residues. The interaction with phospholipids stretch occupies residues 912–1317 (QDSSGLTPFK…DDPLNAFGSQ (406 aa)). The span at 1003–1021 (NKSRVKVRGKRRPQTRAAR) shows a compositional bias: basic residues. The required for interaction with F-actin-capping protein subunit alpha (CAPZA1 or CAPZA2 or CAPZA3) stretch occupies residues 1004-1022 (KSRVKVRGKRRPQTRAARR). Residues Ser1029, Ser1047, Ser1064, and Ser1092 each carry the phosphoserine modification. The short motif at 1107–1114 (LFDSGDIF) is the LFa 12 element. A disordered region spans residues 1119 to 1141 (GSQSMEGTKVKAAETPAHLSGGS). 6 short sequence motifs (LFa) span residues 1147 to 1161 (VFPALSEASSTDDLF), 1177 to 1185 (LLEDEDDLF), 1210 to 1216 (IFEDDIF), 1238 to 1246 (LFDDNIDIF), 1266 to 1275 (VFDDDTDDIF), and 1306 to 1314 (IFDDPLNAF). A phosphoserine mark is found at Ser1152, Ser1155, and Ser1156. Residues 1158–1183 (DDLFQTVKPRPAKKRNPFPLLEDEDD) are disordered. The disordered stretch occupies residues 1277–1317 (SGLQAKKSKPKSQSAEATSELRSDHKVSNIFDDPLNAFGSQ). A Phosphoserine modification is found at Ser1316.

Belongs to the FAM21 family. In terms of assembly, component of the WASH core complex also described as WASH regulatory complex SHRC composed of WASHC1, WASHC2, WASHC3, WASHC4 and WASHC5; in the complex interacts (via N-terminus) directly with WASHC1. The WASH core complex associates via WASHC2 with the F-actin-capping protein dimer (formed by CAPZA1, CAPZA2 or CAPZA3 and CAPZB) in a transient or substoichiometric manner which was initially described as WASH complex. Interacts with VPS35; mediates the association with the retromer CSC complex. Interacts with FKBP15. Interacts with CCDC93, CCDC22, C16orf62 homolog; indicative for an association of the WASH core complex with the CCC complex. Directly interacts with TBC1D23.

Its subcellular location is the early endosome membrane. The protein localises to the cell membrane. Its function is as follows. Acts as a component of the WASH core complex that functions as a nucleation-promoting factor (NPF) at the surface of endosomes, where it recruits and activates the Arp2/3 complex to induce actin polymerization, playing a key role in the fission of tubules that serve as transport intermediates during endosome sorting. Mediates the recruitment of the WASH core complex to endosome membranes via binding to phospholipids and VPS35 of the retromer CSC. Mediates the recruitment of the F-actin-capping protein dimer to the WASH core complex probably promoting localized F-actin polymerization needed for vesicle scission. Via its C-terminus binds various phospholipids, most strongly phosphatidylinositol 4-phosphate (PtdIns-(4)P), phosphatidylinositol 5-phosphate (PtdIns-(5)P) and phosphatidylinositol 3,5-bisphosphate (PtdIns-(3,5)P2). Involved in the endosome-to-plasma membrane trafficking and recycling of SNX27-retromer-dependent cargo proteins, such as GLUT1. Required for the association of DNAJC13, ENTR1, ANKRD50 with retromer CSC subunit VPS35. Required for the endosomal recruitment of CCC complex subunits COMMD1, CCDC93 and C16orf62 homolog. The sequence is that of WASH complex subunit 2 from Cricetulus griseus (Chinese hamster).